The chain runs to 284 residues: Diaminopimelate epimerase (284 aa).

3 residues coordinate substrate: N20, Q53, and N73. The Proton donor role is filled by C82. Substrate is bound by residues 83–84 (GN), N167, N200, and 218–219 (ER). The active-site Proton acceptor is the C227. 228-229 (GS) serves as a coordination point for substrate.

It belongs to the diaminopimelate epimerase family. Homodimer.

Its subcellular location is the cytoplasm. It carries out the reaction (2S,6S)-2,6-diaminopimelate = meso-2,6-diaminopimelate. It participates in amino-acid biosynthesis; L-lysine biosynthesis via DAP pathway; DL-2,6-diaminopimelate from LL-2,6-diaminopimelate: step 1/1. Catalyzes the stereoinversion of LL-2,6-diaminopimelate (L,L-DAP) to meso-diaminopimelate (meso-DAP), a precursor of L-lysine and an essential component of the bacterial peptidoglycan. The sequence is that of Diaminopimelate epimerase from Xanthomonas axonopodis pv. citri (strain 306).